We begin with the raw amino-acid sequence, 228 residues long: Ribose-5-phosphate isomerase A (228 aa).

Substrate-binding positions include 32-35 (TGST), 85-88 (DGAD), and 98-101 (KGGG). Glu-107 (proton acceptor) is an active-site residue. Lys-125 is a substrate binding site.

This sequence belongs to the ribose 5-phosphate isomerase family. Homodimer.

It carries out the reaction aldehydo-D-ribose 5-phosphate = D-ribulose 5-phosphate. It functions in the pathway carbohydrate degradation; pentose phosphate pathway; D-ribose 5-phosphate from D-ribulose 5-phosphate (non-oxidative stage): step 1/1. Functionally, catalyzes the reversible conversion of ribose-5-phosphate to ribulose 5-phosphate. The chain is Ribose-5-phosphate isomerase A from Ralstonia pickettii (strain 12J).